We begin with the raw amino-acid sequence, 274 residues long: 3-methyl-2-oxobutanoate hydroxymethyltransferase (274 aa).

Asp46 and Asp85 together coordinate Mg(2+). 3-methyl-2-oxobutanoate is bound by residues 46–47 (DS), Asp85, and Lys115. Residue Glu117 coordinates Mg(2+). Glu184 functions as the Proton acceptor in the catalytic mechanism.

It belongs to the PanB family. In terms of assembly, homodecamer; pentamer of dimers. Requires Mg(2+) as cofactor.

The protein localises to the cytoplasm. It catalyses the reaction 3-methyl-2-oxobutanoate + (6R)-5,10-methylene-5,6,7,8-tetrahydrofolate + H2O = 2-dehydropantoate + (6S)-5,6,7,8-tetrahydrofolate. It participates in cofactor biosynthesis; (R)-pantothenate biosynthesis; (R)-pantoate from 3-methyl-2-oxobutanoate: step 1/2. Catalyzes the reversible reaction in which hydroxymethyl group from 5,10-methylenetetrahydrofolate is transferred onto alpha-ketoisovalerate to form ketopantoate. This is 3-methyl-2-oxobutanoate hydroxymethyltransferase from Thermoanaerobacter pseudethanolicus (strain ATCC 33223 / 39E) (Clostridium thermohydrosulfuricum).